We begin with the raw amino-acid sequence, 126 residues long: Small ribosomal subunit protein uS12 (126 aa).

The segment at 1 to 23 is disordered; that stretch reads MPTISQLVRKGRKTVASKSTAPA. D89 carries the 3-methylthioaspartic acid modification.

This sequence belongs to the universal ribosomal protein uS12 family. As to quaternary structure, part of the 30S ribosomal subunit. Contacts proteins S8 and S17. May interact with IF1 in the 30S initiation complex.

Functionally, with S4 and S5 plays an important role in translational accuracy. Its function is as follows. Interacts with and stabilizes bases of the 16S rRNA that are involved in tRNA selection in the A site and with the mRNA backbone. Located at the interface of the 30S and 50S subunits, it traverses the body of the 30S subunit contacting proteins on the other side and probably holding the rRNA structure together. The combined cluster of proteins S8, S12 and S17 appears to hold together the shoulder and platform of the 30S subunit. This chain is Small ribosomal subunit protein uS12, found in Clostridium perfringens (strain ATCC 13124 / DSM 756 / JCM 1290 / NCIMB 6125 / NCTC 8237 / Type A).